The chain runs to 516 residues: D-alanine--D-alanyl carrier protein ligase (516 aa).

An ATP-binding site is contributed by 156–157 (TS). A D-alanine-binding site is contributed by Asp-203. ATP is bound at residue 298–303 (NAYGPT). Val-307 contacts D-alanine. Residues Asp-389, 401–404 (YGGR), and Lys-503 each bind ATP. Lys-503 contributes to the D-alanine binding site.

The protein belongs to the ATP-dependent AMP-binding enzyme family. DltA subfamily.

The protein resides in the cytoplasm. It carries out the reaction holo-[D-alanyl-carrier protein] + D-alanine + ATP = D-alanyl-[D-alanyl-carrier protein] + AMP + diphosphate. It participates in cell wall biogenesis; lipoteichoic acid biosynthesis. Catalyzes the first step in the D-alanylation of lipoteichoic acid (LTA), the activation of D-alanine and its transfer onto the D-alanyl carrier protein (Dcp) DltC. In an ATP-dependent two-step reaction, forms a high energy D-alanyl-AMP intermediate, followed by transfer of the D-alanyl residue as a thiol ester to the phosphopantheinyl prosthetic group of the Dcp. D-alanylation of LTA plays an important role in modulating the properties of the cell wall in Gram-positive bacteria, influencing the net charge of the cell wall. This chain is D-alanine--D-alanyl carrier protein ligase, found in Streptococcus pneumoniae (strain ATCC 700669 / Spain 23F-1).